The sequence spans 248 residues: Granulin (248 aa).

The protein belongs to the polyhedrin family.

Functionally, component of the virus occlusion bodies, which are large proteinaceous structures, that protect the virus from the outside environment for extended periods until they are ingested by insect larvae. This Zygaenidae (burnets) protein is Granulin.